The chain runs to 101 residues: MVERLTGRERQQALQSIAGWREVEGRDAIARSFVFTDFNEAFGFMTRVALVAEKADHHPEWRNVYKTVEVVLTTHDAGGVTRRDIDLAAAMNAIAGQFGVA.

The protein belongs to the pterin-4-alpha-carbinolamine dehydratase family.

It catalyses the reaction (4aS,6R)-4a-hydroxy-L-erythro-5,6,7,8-tetrahydrobiopterin = (6R)-L-erythro-6,7-dihydrobiopterin + H2O. This chain is Putative pterin-4-alpha-carbinolamine dehydratase, found in Rhodopseudomonas palustris (strain HaA2).